A 264-amino-acid chain; its full sequence is tRNA (guanine-N(1)-)-methyltransferase (264 aa).

S-adenosyl-L-methionine contacts are provided by residues G125 and L145 to L150.

Belongs to the RNA methyltransferase TrmD family. As to quaternary structure, homodimer.

The protein resides in the cytoplasm. The catalysed reaction is guanosine(37) in tRNA + S-adenosyl-L-methionine = N(1)-methylguanosine(37) in tRNA + S-adenosyl-L-homocysteine + H(+). In terms of biological role, specifically methylates guanosine-37 in various tRNAs. This chain is tRNA (guanine-N(1)-)-methyltransferase, found in Burkholderia multivorans (strain ATCC 17616 / 249).